The sequence spans 346 residues: N-acetyl-gamma-glutamyl-phosphate reductase (346 aa).

Residue C149 is part of the active site.

The protein belongs to the NAGSA dehydrogenase family. Type 1 subfamily.

Its subcellular location is the cytoplasm. The enzyme catalyses N-acetyl-L-glutamate 5-semialdehyde + phosphate + NADP(+) = N-acetyl-L-glutamyl 5-phosphate + NADPH + H(+). It participates in amino-acid biosynthesis; L-arginine biosynthesis; N(2)-acetyl-L-ornithine from L-glutamate: step 3/4. In terms of biological role, catalyzes the NADPH-dependent reduction of N-acetyl-5-glutamyl phosphate to yield N-acetyl-L-glutamate 5-semialdehyde. In Geobacter sp. (strain M21), this protein is N-acetyl-gamma-glutamyl-phosphate reductase.